The primary structure comprises 356 residues: uncharacterized protein (356 aa).

The next 3 helical transmembrane spans lie at 258–275 (SALQAAAAVIEFVAVFYY), 290–312 (PHWLSFSLLAAFTFTVVVYTEAL), and 325–347 (LVLLTLTLAILVILMATLPTLFS).

It localises to the cell membrane. This is an uncharacterized protein from Archaeoglobus fulgidus (strain ATCC 49558 / DSM 4304 / JCM 9628 / NBRC 100126 / VC-16).